A 94-amino-acid polypeptide reads, in one-letter code: Integration host factor subunit beta (94 aa).

Belongs to the bacterial histone-like protein family. In terms of assembly, heterodimer of an alpha and a beta chain.

In terms of biological role, this protein is one of the two subunits of integration host factor, a specific DNA-binding protein that functions in genetic recombination as well as in transcriptional and translational control. This is Integration host factor subunit beta from Escherichia coli O127:H6 (strain E2348/69 / EPEC).